The following is a 619-amino-acid chain: Transcription factor 7-like 2 (619 aa).

The span at 1–11 shows a compositional bias: gly residues; that stretch reads MPQLNGGGGDD. The segment at 1–53 is CTNNB1-binding; it reads MPQLNGGGGDDLGANDELISFKDEGEQEEKSSENSSAERDLADVKSSLVNESE. The disordered stretch occupies residues 1-96; sequence MPQLNGGGGD…AKRQDGGLFK (96 aa). A compositionally biased stretch (basic and acidic residues) spans 19–43; that stretch reads ISFKDEGEQEEKSSENSSAERDLAD. Lys-22 participates in a covalent cross-link: Glycyl lysine isopeptide (Lys-Gly) (interchain with G-Cter in SUMO2). Over residues 47-57 the composition is skewed to polar residues; that stretch reads SLVNESETNQN. Residues 63 to 91 show a composition bias toward basic and acidic residues; it reads EAERRPPPRSESFRDKSRESLEEAAKRQD. Thr-201 and Thr-212 each carry phosphothreonine; by NLK. The tract at residues 201–395 is mediates interaction with MAD2L2; that stretch reads TPLITYSNEH…RRWHALSREE (195 aa). The segment covering 318–328 has biased composition (polar residues); it reads TVKQESSQSDV. 4 disordered regions span residues 318 to 350, 420 to 441, 496 to 547, and 574 to 619; these read TVKQ…KPHI, RDNY…TNEH, CLSP…AHLS, and DLPP…KSLE. Lys-320 is covalently cross-linked (Glycyl lysine isopeptide (Lys-Gly) (interchain with G-Cter in SUMO)). Basic and acidic residues predominate over residues 335–346; the sequence is KHQDSKKEEEKK. The segment at residues 350–418 is a DNA-binding region (HMG box); that stretch reads IKKPLNAFML…LHMQLYPGWS (69 aa). The Nuclear localization signal signature appears at 425 to 430; that stretch reads KKKKRK. Positions 459 to 505 are promoter-specific activation domain; that stretch reads SAPKKCRARFGLDQQNNWCGPCRRKKKCVRYIQGEGSCLSPPSSDGS. Low complexity predominate over residues 496–508; that stretch reads CLSPPSSDGSLLD. Lys-539 is covalently cross-linked (Glycyl lysine isopeptide (Lys-Gly) (interchain with G-Cter in SUMO2)). Residues 574–603 show a composition bias toward low complexity; sequence DLPPAALQPAAPSSSIAQPSTSSLHSHSSL. Residues 604-619 are compositionally biased toward polar residues; it reads AGTQPQPLSLVTKSLE.

Belongs to the TCF/LEF family. As to quaternary structure, interacts with TGFB1I1. Interacts with CTNNB1 (via the armadillo repeat); forms stable transcription complex. Interacts with EP300. Interacts with NLK. Interacts with CCDC85B (probably through the HMG box); prevents interaction with CTNNB1. Interacts with TNIK. Interacts with MAD2L2; prevents TCF7L2/TCF4 binding to promZIPK/DAPK3oters, negatively modulating its transcriptional activity. Interacts with ZIPK/DAPK3. Interacts with XIAP/BIRC4 and TLE3. Interacts with DDIT3/CHOP. The CTNNB1 and TCF7L2/TCF4 complex interacts with PML (isoform PML-4). Identified in a complex with CTNNB1 and FERMT2. Interacts with SPIN1. Interacts with C11orf84/SPINDOC in a SPIN1-dependent manner. Interacts with DAZAP2; the interaction results in localization of DAZAP2 to the nucleus. Post-translationally, in vitro, phosphorylated by TNIK. In terms of processing, phosphorylated at Thr-201 and/or Thr-212 by NLK. Phosphorylation by NLK at these sites inhibits DNA-binding by TCF7L2/TCF4, thereby preventing transcriptional activation of target genes of the canonical Wnt/beta-catenin signaling pathway. Polysumoylated. Sumoylation is enhanced by PIAS family members and desumoylation is enhanced by SENP2. Sumoylation/desumoylation regulates TCF7L2/TCF4 transcription activity in the Wnt/beta-catenin signaling pathway without altering interaction with CTNNB1 nor binding to DNA. Detected in epithelium from small intestine, with the highest expression at the top of the crypts and a gradient of expression from crypt to villus. Detected in colon epithelium and colon cancer, and in epithelium from mammary gland and carcinomas derived therefrom.

It is found in the nucleus. It localises to the PML body. Participates in the Wnt signaling pathway and modulates MYC expression by binding to its promoter in a sequence-specific manner. Acts as a repressor in the absence of CTNNB1, and as activator in its presence. Activates transcription from promoters with several copies of the Tcf motif 5'-CCTTTGATC-3' in the presence of CTNNB1. TLE1, TLE2, TLE3 and TLE4 repress transactivation mediated by TCF7L2/TCF4 and CTNNB1. Expression of dominant-negative mutants results in cell-cycle arrest in G1. Necessary for the maintenance of the epithelial stem-cell compartment of the small intestine. The protein is Transcription factor 7-like 2 (TCF7L2) of Homo sapiens (Human).